Consider the following 92-residue polypeptide: YcgL domain-containing protein VC0395_A1544/VC395_2072 (92 aa).

Residues 1-84 (MLCSIYKSPK…PPENLLEQHK (84 aa)) form the YcgL domain. Positions 71 to 92 (QLPPPPENLLEQHKERKARQTP) are disordered.

The protein is YcgL domain-containing protein VC0395_A1544/VC395_2072 of Vibrio cholerae serotype O1 (strain ATCC 39541 / Classical Ogawa 395 / O395).